The following is a 333-amino-acid chain: Tetraacyldisaccharide 4'-kinase (333 aa).

55-62 (TIGGNGKT) contacts ATP.

It belongs to the LpxK family.

It carries out the reaction a lipid A disaccharide + ATP = a lipid IVA + ADP + H(+). It participates in glycolipid biosynthesis; lipid IV(A) biosynthesis; lipid IV(A) from (3R)-3-hydroxytetradecanoyl-[acyl-carrier-protein] and UDP-N-acetyl-alpha-D-glucosamine: step 6/6. Its function is as follows. Transfers the gamma-phosphate of ATP to the 4'-position of a tetraacyldisaccharide 1-phosphate intermediate (termed DS-1-P) to form tetraacyldisaccharide 1,4'-bis-phosphate (lipid IVA). The chain is Tetraacyldisaccharide 4'-kinase from Blochmanniella floridana.